Reading from the N-terminus, the 207-residue chain is dTTP/UTP pyrophosphatase (207 aa).

Residue Asp86 is the Proton acceptor of the active site.

The protein belongs to the Maf family. YhdE subfamily. Requires a divalent metal cation as cofactor.

The protein resides in the cytoplasm. The catalysed reaction is dTTP + H2O = dTMP + diphosphate + H(+). It catalyses the reaction UTP + H2O = UMP + diphosphate + H(+). Functionally, nucleoside triphosphate pyrophosphatase that hydrolyzes dTTP and UTP. May have a dual role in cell division arrest and in preventing the incorporation of modified nucleotides into cellular nucleic acids. In Nitrosospira multiformis (strain ATCC 25196 / NCIMB 11849 / C 71), this protein is dTTP/UTP pyrophosphatase.